Consider the following 178-residue polypeptide: CDP-archaeol synthase (178 aa).

A run of 5 helical transmembrane segments spans residues 3-23 (LLLL…ANAV), 56-76 (FFGI…VILY), 91-111 (IILS…GSFI), 131-151 (FIIF…NIIV), and 152-172 (LLLV…YKLH).

This sequence belongs to the CDP-archaeol synthase family. The cofactor is Mg(2+).

It is found in the cell membrane. The enzyme catalyses 2,3-bis-O-(geranylgeranyl)-sn-glycerol 1-phosphate + CTP + H(+) = CDP-2,3-bis-O-(geranylgeranyl)-sn-glycerol + diphosphate. The protein operates within membrane lipid metabolism; glycerophospholipid metabolism. Functionally, catalyzes the formation of CDP-2,3-bis-(O-geranylgeranyl)-sn-glycerol (CDP-archaeol) from 2,3-bis-(O-geranylgeranyl)-sn-glycerol 1-phosphate (DGGGP) and CTP. This reaction is the third ether-bond-formation step in the biosynthesis of archaeal membrane lipids. The polypeptide is CDP-archaeol synthase (Methanococcus maripaludis (strain DSM 14266 / JCM 13030 / NBRC 101832 / S2 / LL)).